We begin with the raw amino-acid sequence, 310 residues long: Ribosomal protein uL3 glutamine methyltransferase (310 aa).

It belongs to the protein N5-glutamine methyltransferase family. PrmB subfamily.

It carries out the reaction L-glutaminyl-[ribosomal protein uL3] + S-adenosyl-L-methionine = N(5)-methyl-L-glutaminyl-[ribosomal protein uL3] + S-adenosyl-L-homocysteine + H(+). In terms of biological role, specifically methylates large ribosomal subunit protein uL3 on 'Gln-150'. This chain is Ribosomal protein uL3 glutamine methyltransferase, found in Shigella dysenteriae serotype 1 (strain Sd197).